The chain runs to 263 residues: MESITISQLKNWKRNKKKIAAITAYDFSFSRLFSNCGIPVILIGDSLGMTIQGHTSTLPVKIEDIAYHTKAVRKGAPNTFLISDLPFMSYYDTKQALKNTAKIIRSGANMIKMEGGKWLIEIIRELSNRLILICGHIGLIPQSFHYLGGYKVQGRKENDANKLIDEALLLEEAGINMLILECIPEKLAKKITESLSIPVIGIGSGKNTDGQILVMHDLLGITEGKTPSFTKNFLSESDSIQKAIQKYIYEVEHSIYPSKKHSF.

Mg(2+)-binding residues include aspartate 45 and aspartate 84. Residues 45–46 (DS), aspartate 84, and lysine 112 each bind 3-methyl-2-oxobutanoate. Glutamate 114 is a Mg(2+) binding site. Glutamate 181 functions as the Proton acceptor in the catalytic mechanism.

Belongs to the PanB family. As to quaternary structure, homodecamer; pentamer of dimers. The cofactor is Mg(2+).

Its subcellular location is the cytoplasm. It catalyses the reaction 3-methyl-2-oxobutanoate + (6R)-5,10-methylene-5,6,7,8-tetrahydrofolate + H2O = 2-dehydropantoate + (6S)-5,6,7,8-tetrahydrofolate. It participates in cofactor biosynthesis; (R)-pantothenate biosynthesis; (R)-pantoate from 3-methyl-2-oxobutanoate: step 1/2. Functionally, catalyzes the reversible reaction in which hydroxymethyl group from 5,10-methylenetetrahydrofolate is transferred onto alpha-ketoisovalerate to form ketopantoate. This Buchnera aphidicola subsp. Acyrthosiphon pisum (strain 5A) protein is 3-methyl-2-oxobutanoate hydroxymethyltransferase.